We begin with the raw amino-acid sequence, 243 residues long: ATP-dependent dethiobiotin synthetase BioD (243 aa).

12-17 (DVGKTL) is a binding site for ATP. Residue Thr-16 coordinates Mg(2+). Residue Lys-37 is part of the active site. Position 41 (Ser-41) interacts with substrate. ATP contacts are provided by residues Asp-54, 115-118 (EGCG), and 179-180 (NM). Residues Asp-54 and Glu-115 each contribute to the Mg(2+) site.

It belongs to the dethiobiotin synthetase family. In terms of assembly, homodimer. It depends on Mg(2+) as a cofactor.

It localises to the cytoplasm. The catalysed reaction is (7R,8S)-7,8-diammoniononanoate + CO2 + ATP = (4R,5S)-dethiobiotin + ADP + phosphate + 3 H(+). It participates in cofactor biosynthesis; biotin biosynthesis; biotin from 7,8-diaminononanoate: step 1/2. Its function is as follows. Catalyzes a mechanistically unusual reaction, the ATP-dependent insertion of CO2 between the N7 and N8 nitrogen atoms of 7,8-diaminopelargonic acid (DAPA, also called 7,8-diammoniononanoate) to form a ureido ring. The polypeptide is ATP-dependent dethiobiotin synthetase BioD (Caldicellulosiruptor saccharolyticus (strain ATCC 43494 / DSM 8903 / Tp8T 6331)).